Consider the following 421-residue polypeptide: UDP-N-acetylglucosamine 1-carboxyvinyltransferase (421 aa).

22 to 23 (KN) is a binding site for phosphoenolpyruvate. Position 93 (R93) interacts with UDP-N-acetyl-alpha-D-glucosamine. The active-site Proton donor is the C117. Residue C117 is modified to 2-(S-cysteinyl)pyruvic acid O-phosphothioketal. Residues 122–126 (RPVDQ), D309, and I331 contribute to the UDP-N-acetyl-alpha-D-glucosamine site.

It belongs to the EPSP synthase family. MurA subfamily.

The protein localises to the cytoplasm. It carries out the reaction phosphoenolpyruvate + UDP-N-acetyl-alpha-D-glucosamine = UDP-N-acetyl-3-O-(1-carboxyvinyl)-alpha-D-glucosamine + phosphate. It functions in the pathway cell wall biogenesis; peptidoglycan biosynthesis. In terms of biological role, cell wall formation. Adds enolpyruvyl to UDP-N-acetylglucosamine. The chain is UDP-N-acetylglucosamine 1-carboxyvinyltransferase from Albidiferax ferrireducens (strain ATCC BAA-621 / DSM 15236 / T118) (Rhodoferax ferrireducens).